The primary structure comprises 134 residues: Large ribosomal subunit protein uL16c (134 aa).

The protein belongs to the universal ribosomal protein uL16 family. Part of the 50S ribosomal subunit.

Its subcellular location is the plastid. The protein localises to the chloroplast. In Guillardia theta (Cryptophyte), this protein is Large ribosomal subunit protein uL16c.